Consider the following 477-residue polypeptide: Proton extrusion protein PxcA (477 aa).

A run of 3 helical transmembrane segments spans residues 239-259, 354-374, and 437-457; these read FILLVILVPLLIHQLSKITFV, GIKNIFCDFISLITFVIIIST, and FNFLFIATFPVILDAVFKYWI.

It belongs to the CemA family.

The protein localises to the cell inner membrane. Functionally, required for H(+) efflux immediately after light irradiation to form a rapid H(+) concentration gradient across the thylakoid membranes. Together with PxcL, contributes to transient H(+) uptake following dark to light transition. This Trichodesmium erythraeum (strain IMS101) protein is Proton extrusion protein PxcA.